Consider the following 437-residue polypeptide: Methylenetetrahydrofolate--tRNA-(uracil-5-)-methyltransferase TrmFO (437 aa).

An FAD-binding site is contributed by 10-15; the sequence is GAGLAG.

Belongs to the MnmG family. TrmFO subfamily. It depends on FAD as a cofactor.

It localises to the cytoplasm. The enzyme catalyses uridine(54) in tRNA + (6R)-5,10-methylene-5,6,7,8-tetrahydrofolate + NADH + H(+) = 5-methyluridine(54) in tRNA + (6S)-5,6,7,8-tetrahydrofolate + NAD(+). The catalysed reaction is uridine(54) in tRNA + (6R)-5,10-methylene-5,6,7,8-tetrahydrofolate + NADPH + H(+) = 5-methyluridine(54) in tRNA + (6S)-5,6,7,8-tetrahydrofolate + NADP(+). Functionally, catalyzes the folate-dependent formation of 5-methyl-uridine at position 54 (M-5-U54) in all tRNAs. The chain is Methylenetetrahydrofolate--tRNA-(uracil-5-)-methyltransferase TrmFO from Lysinibacillus sphaericus (strain C3-41).